The primary structure comprises 110 residues: uncharacterized protein (110 aa).

It is found in the plastid. The protein localises to the chloroplast. This is an uncharacterized protein from Auxenochlorella pyrenoidosa (Freshwater green alga).